Consider the following 287-residue polypeptide: Cell division protein ZipA (287 aa).

Position 1 (Met-1) is a topological domain, periplasmic. The chain crosses the membrane as a helical span at residues 2-22 (EIGLREWLIVIGIIVIAGILF). Over 23–287 (DGWRRMRGGK…FERRALTQKR (265 aa)) the chain is Cytoplasmic. The segment at 70-143 (LDEHDLPSMS…APRQSVNDQP (74 aa)) is disordered.

It belongs to the ZipA family. Interacts with FtsZ via their C-terminal domains.

The protein localises to the cell inner membrane. Essential cell division protein that stabilizes the FtsZ protofilaments by cross-linking them and that serves as a cytoplasmic membrane anchor for the Z ring. Also required for the recruitment to the septal ring of downstream cell division proteins. This Pseudomonas fluorescens (strain SBW25) protein is Cell division protein ZipA.